The following is a 510-amino-acid chain: Bifunctional purine biosynthesis protein PurH (510 aa).

Positions 1-145 constitute an MGS-like domain; that stretch reads MTKRALLSVS…KNFAAVLPIV (145 aa).

The protein belongs to the PurH family.

The enzyme catalyses (6R)-10-formyltetrahydrofolate + 5-amino-1-(5-phospho-beta-D-ribosyl)imidazole-4-carboxamide = 5-formamido-1-(5-phospho-D-ribosyl)imidazole-4-carboxamide + (6S)-5,6,7,8-tetrahydrofolate. The catalysed reaction is IMP + H2O = 5-formamido-1-(5-phospho-D-ribosyl)imidazole-4-carboxamide. The protein operates within purine metabolism; IMP biosynthesis via de novo pathway; 5-formamido-1-(5-phospho-D-ribosyl)imidazole-4-carboxamide from 5-amino-1-(5-phospho-D-ribosyl)imidazole-4-carboxamide (10-formyl THF route): step 1/1. Its pathway is purine metabolism; IMP biosynthesis via de novo pathway; IMP from 5-formamido-1-(5-phospho-D-ribosyl)imidazole-4-carboxamide: step 1/1. The chain is Bifunctional purine biosynthesis protein PurH from Lactiplantibacillus plantarum (strain ATCC BAA-793 / NCIMB 8826 / WCFS1) (Lactobacillus plantarum).